The primary structure comprises 154 residues: Peptidoglycan amidase Tse1 (154 aa).

A disulfide bridge links Cys7 with Cys148. Cys30 (nucleophile) is an active-site residue. His91 functions as the Proton acceptor in the catalytic mechanism.

As to quaternary structure, forms a heterotetramer with Tsi1 consisting of two Tse1 dimers and two Tsi1 dimers. Formation of the complex inactivates Tse1 enzymatic activity.

Its subcellular location is the host membrane. The protein resides in the secreted. It carries out the reaction Hydrolysis of gamma-D-glutamyl bonds to the L-terminus (position 7) of meso-diaminopimelic acid (meso-A2pm) in 7-(L-Ala-gamma-D-Glu)-meso-A2pm and 7-(L-Ala-gamma-D-Glu)-7-(D-Ala)-meso-A2pm. It is required that the D-terminal amino and carboxy groups of meso-A2pm are unsubstituted.. Functionally, toxin secreted by the H1 type VI (H1-T6SS) secretion system into the periplasm of recipient cells. Degrades peptidoglycan via amidase activity thereby helping itself to compete with other bacteria. To protect itself, the bacterium synthesizes immunity protein Tsi1 that specifically interacts with and inactivates cognate toxin. The polypeptide is Peptidoglycan amidase Tse1 (Pseudomonas aeruginosa (strain ATCC 15692 / DSM 22644 / CIP 104116 / JCM 14847 / LMG 12228 / 1C / PRS 101 / PAO1)).